The chain runs to 490 residues: Probable cytosol aminopeptidase (490 aa).

Positions 262 and 267 each coordinate Mn(2+). The active site involves Lys274. Residues Asp285, Asp344, and Glu346 each contribute to the Mn(2+) site. The active site involves Arg348.

This sequence belongs to the peptidase M17 family. It depends on Mn(2+) as a cofactor.

The protein resides in the cytoplasm. It catalyses the reaction Release of an N-terminal amino acid, Xaa-|-Yaa-, in which Xaa is preferably Leu, but may be other amino acids including Pro although not Arg or Lys, and Yaa may be Pro. Amino acid amides and methyl esters are also readily hydrolyzed, but rates on arylamides are exceedingly low.. It carries out the reaction Release of an N-terminal amino acid, preferentially leucine, but not glutamic or aspartic acids.. Functionally, presumably involved in the processing and regular turnover of intracellular proteins. Catalyzes the removal of unsubstituted N-terminal amino acids from various peptides. The protein is Probable cytosol aminopeptidase of Xanthomonas oryzae pv. oryzae (strain MAFF 311018).